We begin with the raw amino-acid sequence, 730 residues long: Elongation factor 2 (730 aa).

Residues 19–260 (VMIRNIAIIA…MVIRFLPSPI (242 aa)) form the tr-type G domain. GTP-binding positions include 28–35 (AHIDHGKT), 94–98 (DTPGH), and 148–151 (NKVD). Position 596 is a diphthamide (His596).

Belongs to the TRAFAC class translation factor GTPase superfamily. Classic translation factor GTPase family. EF-G/EF-2 subfamily.

Its subcellular location is the cytoplasm. In terms of biological role, catalyzes the GTP-dependent ribosomal translocation step during translation elongation. During this step, the ribosome changes from the pre-translocational (PRE) to the post-translocational (POST) state as the newly formed A-site-bound peptidyl-tRNA and P-site-bound deacylated tRNA move to the P and E sites, respectively. Catalyzes the coordinated movement of the two tRNA molecules, the mRNA and conformational changes in the ribosome. In Methanococcoides methylutens, this protein is Elongation factor 2 (fusA).